The primary structure comprises 122 residues: Basic phospholipase A2 homolog myotoxin II (122 aa).

7 disulfides stabilise this stretch: Cys26/Cys116, Cys28/Cys44, Cys43/Cys95, Cys49/Cys122, Cys50/Cys88, Cys57/Cys81, and Cys75/Cys86. Positions 105–118 (KKYRYNYLKPFCKK) are important for membrane-damaging activities in eukaryotes and bacteria; heparin-binding.

Belongs to the phospholipase A2 family. Group II subfamily. K49 sub-subfamily. As to quaternary structure, homodimer; non-covalently linked (probable alternative/compact dimer conformation). In terms of tissue distribution, expressed by the venom gland.

The protein resides in the secreted. Its activity is regulated as follows. Myotoxic activity is inhibited by suramin and rosmarinic acid. Cytotoxic and myotoxic activities are inhibited by pre-incubation with varespladib. Suramin inhibits this myotoxin by (i) direct blockage of the MDoS and MDiS, preventing the toxin/membrane interaction and disruption and (ii) formation of an oligomeric complex, resulting in a tetrameric configuration for which both MDoS and MDiS becomes physically inaccessible, thus avoiding any possibility of toxin-membrane interaction or disruption. Heparin completely inhibits the cytotoxic and bactericidal activities, but only partially the myotoxic, edema-inducing and lethal effects. Functionally, snake venom phospholipase A2 (PLA2) homolog that lacks enzymatic activity. Shows high myotoxin activities. Also shows neurotoxicity, since it induces muscle paralysis when tested on mouse phrenic-diaphragm preparations. Displays edema-inducing activities. Also displays antimicrobial activity against E.coli and C.albicans, as well as antitumoral activity against some human and mice cell lines. In addition, it is effective as parasiticidal agent against Leishmania sp. and S.mansoni. It also disrupts negatively charged liposomes in a dose- and temperature-dependent manner and shows toxicity by intraperitoneal route. In contrast to other phospholipase A2-like toxins, this myotoxin does not require fatty acid binding to be active. In Bothrops moojeni (Lance-headed viper), this protein is Basic phospholipase A2 homolog myotoxin II.